Consider the following 1071-residue polypeptide: V-type proton ATPase catalytic subunit A (1071 aa).

The residue at position 2 (Ala-2) is an N-acetylalanine. A Phosphothreonine modification is found at Thr-131. An ATP-binding site is contributed by 257–264 (GAFGCGKT). One can recognise a DOD-type homing endonuclease domain in the interval 494–642 (LLGLWIGDGL…LVSLARSLGL (149 aa)). 2 positions are modified to phosphoserine: Ser-858 and Ser-928.

This sequence belongs to the ATPase alpha/beta chains family. In terms of assembly, V-ATPase is a heteromultimeric enzyme composed of a peripheral catalytic V1 complex (components A to H) attached to an integral membrane V0 proton pore complex (components: a, c, c', c'', d, e, f and VOA1). Interacts with RAV1 and RAV2 components of the RAVE complex, which are essential for the stability and assembly of V-ATPase. This protein undergoes a protein self splicing that involves a post-translational excision of the VDE intervening region (intein) followed by peptide ligation.

It localises to the vacuole membrane. The enzyme catalyses ATP + H2O + 4 H(+)(in) = ADP + phosphate + 5 H(+)(out). Its function is as follows. Catalytic subunit of the V1 complex of vacuolar(H+)-ATPase (V-ATPase), a multisubunit enzyme composed of a peripheral complex (V1) that hydrolyzes ATP and a membrane integral complex (V0) that translocates protons. V-ATPase is responsible for acidifying and maintaining the pH of intracellular compartments. Functionally, PI-SceI is an endonuclease that can cleave at a site present in a VMA1 allele that lacks the derived endonuclease segment of the open reading frame; cleavage at this site only occurs during meiosis and initiates 'homing', a genetic event that converts a VMA1 allele lacking VDE into one that contains it. The polypeptide is V-type proton ATPase catalytic subunit A (Saccharomyces cerevisiae (strain ATCC 204508 / S288c) (Baker's yeast)).